Consider the following 21-residue polypeptide: Fibrinogen beta chain (21 aa).

At Q1 the chain carries Pyrrolidone carboxylic acid. Position 6 is a sulfotyrosine (Y6).

Heterohexamer; disulfide linked. Contains 2 sets of 3 non-identical chains (alpha, beta and gamma). The 2 heterotrimers are in head to head conformation with the N-termini in a small central domain. Post-translationally, conversion of fibrinogen to fibrin is triggered by thrombin, which cleaves fibrinopeptides A and B from alpha and beta chains, and thus exposes the N-terminal polymerization sites responsible for the formation of the soft clot.

It localises to the secreted. Functionally, cleaved by the protease thrombin to yield monomers which, together with fibrinogen alpha (FGA) and fibrinogen gamma (FGG), polymerize to form an insoluble fibrin matrix. Fibrin has a major function in hemostasis as one of the primary components of blood clots. In addition, functions during the early stages of wound repair to stabilize the lesion and guide cell migration during re-epithelialization. Was originally thought to be essential for platelet aggregation, based on in vitro studies using anticoagulated blood. However subsequent studies have shown that it is not absolutely required for thrombus formation in vivo. Enhances expression of SELP in activated platelets. Maternal fibrinogen is essential for successful pregnancy. Fibrin deposition is also associated with infection, where it protects against IFNG-mediated hemorrhage. May also facilitate the antibacterial immune response via both innate and T-cell mediated pathways. This chain is Fibrinogen beta chain (FGB), found in Odocoileus hemionus (Mule deer).